Reading from the N-terminus, the 274-residue chain is Large ribosomal subunit protein uL2 (274 aa).

The segment at 214–274 is disordered; the sequence is LGRRPRTRPV…NKYIVERRKK (61 aa).

It belongs to the universal ribosomal protein uL2 family. In terms of assembly, part of the 50S ribosomal subunit. Forms a bridge to the 30S subunit in the 70S ribosome.

Functionally, one of the primary rRNA binding proteins. Required for association of the 30S and 50S subunits to form the 70S ribosome, for tRNA binding and peptide bond formation. It has been suggested to have peptidyltransferase activity; this is somewhat controversial. Makes several contacts with the 16S rRNA in the 70S ribosome. This chain is Large ribosomal subunit protein uL2, found in Flavobacterium johnsoniae (strain ATCC 17061 / DSM 2064 / JCM 8514 / BCRC 14874 / CCUG 350202 / NBRC 14942 / NCIMB 11054 / UW101) (Cytophaga johnsonae).